Here is a 298-residue protein sequence, read N- to C-terminus: Probable 2-(5''-triphosphoribosyl)-3'-dephosphocoenzyme-A synthase (298 aa).

It belongs to the CitG/MdcB family.

The enzyme catalyses 3'-dephospho-CoA + ATP = 2'-(5''-triphospho-alpha-D-ribosyl)-3'-dephospho-CoA + adenine. The polypeptide is Probable 2-(5''-triphosphoribosyl)-3'-dephosphocoenzyme-A synthase (Salmonella arizonae (strain ATCC BAA-731 / CDC346-86 / RSK2980)).